Reading from the N-terminus, the 69-residue chain is Bacteriocin microcin B17 (69 aa).

Positions 1-26 are excised as a propeptide; it reads MELKASEFGVVLSVDALKLSRQSPLG. The segment at residues 39–40 is a cross-link (oxazole-4-carboxylic acid (Gly-Ser)); it reads GS. Positions 40–41 form a cross-link, thiazole-4-carboxylic acid (Ser-Cys); sequence SC. 3 cross-links (thiazole-4-carboxylic acid (Gly-Cys)) span residues 47 to 48, 50 to 51, and 54 to 55; these read GC. Residues 55–56 constitute a cross-link (oxazole-4-carboxylic acid (Cys-Ser)); sequence CS. 2 cross-links (oxazole-4-carboxylic acid (Gly-Ser)) span residues 61-62 and 64-65; these read GS.

The processed N-terminus does not resemble a typical secretion signal sequence. In terms of processing, maturation of thiazole and oxazole containing antibiotics involves the enzymatic condensation of a Cys, Ser or Thr with the alpha-carbonyl of the preceding amino acid to form a thioether or ether bond, then dehydration to form a double bond with the alpha-amino nitrogen. Thiazoline or oxazoline rings are dehydrogenated to form thiazole or oxazole rings.

This glycine-rich peptide antibiotic inhibits DNA replication in many enteric bacteria, that leads to induction of the SOS repair system, massive DNA degradation and cell death. B17 inhibits type II topoisomerase by trapping an enzyme - DNA cleavable complex. This chain is Bacteriocin microcin B17 (mcbA), found in Escherichia coli.